The chain runs to 150 residues: 3-dehydroquinate dehydratase (150 aa).

Tyrosine 25 functions as the Proton acceptor in the catalytic mechanism. The substrate site is built by asparagine 76, histidine 82, and aspartate 89. The active-site Proton donor is the histidine 102. Residues 103-104 and arginine 113 contribute to the substrate site; that span reads LS.

The protein belongs to the type-II 3-dehydroquinase family. In terms of assembly, homododecamer.

It catalyses the reaction 3-dehydroquinate = 3-dehydroshikimate + H2O. It functions in the pathway metabolic intermediate biosynthesis; chorismate biosynthesis; chorismate from D-erythrose 4-phosphate and phosphoenolpyruvate: step 3/7. Catalyzes a trans-dehydration via an enolate intermediate. The chain is 3-dehydroquinate dehydratase from Trichodesmium erythraeum (strain IMS101).